The chain runs to 118 residues: Small ribosomal subunit protein uS13 (118 aa).

Residues 94-118 form a disordered region; it reads SLPLRGQRTKTNARTRKGPRKPIRK.

This sequence belongs to the universal ribosomal protein uS13 family. In terms of assembly, part of the 30S ribosomal subunit. Forms a loose heterodimer with protein S19. Forms two bridges to the 50S subunit in the 70S ribosome.

Located at the top of the head of the 30S subunit, it contacts several helices of the 16S rRNA. In the 70S ribosome it contacts the 23S rRNA (bridge B1a) and protein L5 of the 50S subunit (bridge B1b), connecting the 2 subunits; these bridges are implicated in subunit movement. Contacts the tRNAs in the A and P-sites. The protein is Small ribosomal subunit protein uS13 of Shewanella woodyi (strain ATCC 51908 / MS32).